We begin with the raw amino-acid sequence, 3974 residues long: Hybrid PKS-NRPS synthetase 1 (3974 aa).

One can recognise a Ketosynthase family 3 (KS3) domain in the interval 5-442 (SQKIAIIGSA…GTNAHCLIES (438 aa)). Active-site for beta-ketoacyl synthase activity residues include cysteine 179, histidine 316, and histidine 362. The interval 561–883 (IFTGQGAQWA…TGILERGLDD (323 aa)) is malonyl-CoA:ACP transacylase (MAT) domain. The segment at 954–1079 (HPLLGSRLSA…HDSELGIPES (126 aa)) is N-terminal hotdog fold. The interval 954–1251 (HPLLGSRLSA…QVESVKLVPV (298 aa)) is dehydratase (DH) domain. A PKS/mFAS DH domain is found at 954-1257 (HPLLGSRLSA…LVPVITPDAS (304 aa)). The active-site Proton acceptor; for dehydratase activity is the histidine 986. The tract at residues 1107–1257 (TTPISSAKIY…LVPVITPDAS (151 aa)) is C-terminal hotdog fold. Catalysis depends on aspartate 1165, which acts as the Proton donor; for dehydratase activity. The tract at residues 1398–1529 (PWNTELRNAI…GYLLLVAKTG (132 aa)) is methyltransferase (MT) domain. A ketoreductase (KR) domain region spans residues 2108-2282 (TYFLAGMTDS…ASIMDTGVVT (175 aa)). The tract at residues 2492 to 2516 (AGRSASPGASCSDRSLSTRSDETRS) is disordered. Residues 2498 to 2509 (PGASCSDRSLST) show a composition bias toward polar residues. A condensation (C) domain region spans residues 2560–2994 (APLSPGQAQL…LERLRTSSDQ (435 aa)). The adenylation (A) (KR) domain stretch occupies residues 3021–3423 (DAMAEKYFDQ…DGSLILLGRM (403 aa)). The region spanning 3537–3613 (SADQLVEAEV…EMAEKMASVR (77 aa)) is the Carrier domain. An O-(pantetheine 4'-phosphoryl)serine modification is found at serine 3573. Residues 3657–3940 (VVLTGAADLL…KLEMGEWIAL (284 aa)) form a reductase (RED) domain region.

The protein in the C-terminal section; belongs to the NRP synthetase family.

It participates in secondary metabolite biosynthesis. Hybrid PKS-NRPS synthetase; part of the hps1-dma1 gene cluster that probably mediates the biosynthesis a derivative of cyclopiazonic acid (CPA). The hybrid polyketide synthase-nonribosomal peptide synthetase (PKS-NRPS) nps1 might incorporates acetyl-CoA, malonyl-CoA, and tryptophan (Trp) and utilizes a C-terminal redox-incompetent reductase domain to make and release the tryptophan tetramic acid, cyclo-acetoacetyl-L-tryptophan (c-AATrp), as the first intermediate in the pathway. In addition, the cluster also includes the tryptophan dimethylallyltransferase dma1, the FAD-dependent oxidoreductase toxD, the cytochrome P450 monooxygenase cyp3.1 and the methyltransferase DOTSEDRAFT_139328; the latter 2 being not present in all CPA-producing fungi but involved in additional modifications that occur in biosynthesis the of a range of CPA and CPA-like products. Further studies are required to clarify whether the CPA-like hps1-dma1 cluster is functional or a non-functional relic reflecting evolution of D.septosporum. The protein is Hybrid PKS-NRPS synthetase 1 of Dothistroma septosporum (strain NZE10 / CBS 128990) (Red band needle blight fungus).